A 266-amino-acid chain; its full sequence is Phosphatidate cytidylyltransferase (266 aa).

8 helical membrane passes run 16-36 (VVLI…LFWA), 52-72 (LFQV…WVAA), 78-98 (PVEC…YQKA), 101-121 (SEAI…FGVY), 125-145 (GAVA…GAFF), 164-184 (LEGA…VGMG), 186-206 (LSGG…MAVF), and 237-257 (LDSM…LEIW).

The protein belongs to the CDS family.

The protein resides in the cell inner membrane. The enzyme catalyses a 1,2-diacyl-sn-glycero-3-phosphate + CTP + H(+) = a CDP-1,2-diacyl-sn-glycerol + diphosphate. The protein operates within phospholipid metabolism; CDP-diacylglycerol biosynthesis; CDP-diacylglycerol from sn-glycerol 3-phosphate: step 3/3. In Helicobacter pylori (strain J99 / ATCC 700824) (Campylobacter pylori J99), this protein is Phosphatidate cytidylyltransferase (cdsA).